The sequence spans 422 residues: Gamma-glutamyl phosphate reductase (422 aa).

This sequence belongs to the gamma-glutamyl phosphate reductase family.

It is found in the cytoplasm. It carries out the reaction L-glutamate 5-semialdehyde + phosphate + NADP(+) = L-glutamyl 5-phosphate + NADPH + H(+). The protein operates within amino-acid biosynthesis; L-proline biosynthesis; L-glutamate 5-semialdehyde from L-glutamate: step 2/2. Its function is as follows. Catalyzes the NADPH-dependent reduction of L-glutamate 5-phosphate into L-glutamate 5-semialdehyde and phosphate. The product spontaneously undergoes cyclization to form 1-pyrroline-5-carboxylate. In Chlorobium phaeovibrioides (strain DSM 265 / 1930) (Prosthecochloris vibrioformis (strain DSM 265)), this protein is Gamma-glutamyl phosphate reductase.